We begin with the raw amino-acid sequence, 917 residues long: Chitin synthase 1 (917 aa).

Residues 1–11 show a composition bias toward basic and acidic residues; sequence MAYHGRGDGYD. The disordered stretch occupies residues 1–56; that stretch reads MAYHGRGDGYDGHQLQDLPGGHNQGDQHDDAQAPFLSENPMPYDNDRLGTDTPPVR. Over 1 to 570 the chain is Extracellular; that stretch reads MAYHGRGDGY…YKSGHNIVRM (570 aa). The N-linked (GlcNAc...) asparagine glycan is linked to Asn-544. A helical transmembrane segment spans residues 571–591; the sequence is FFFHVQLIYNIANVIFTWFSL. At 592 to 629 the chain is on the cytoplasmic side; sequence ASYWLTTTVIMDLVGTPVTASSSSAEHHGWPFGDTVTP. A helical membrane pass occupies residues 630–650; the sequence is FFNAVLKYIYLAFVILQFILA. Residues 651–664 are Extracellular-facing; it reads LGNRPKGSKWTYIT. A helical transmembrane segment spans residues 665-685; it reads SFFVFSLIQSYILVLSGYLVA. The Cytoplasmic segment spans residues 686–716; that stretch reads RAFSVPLDQQLQLDNAKDAMASLFGGSGSAG. A helical membrane pass occupies residues 717–737; that stretch reads VILVALVTIYGLYFLASFMYL. The Extracellular portion of the chain corresponds to 738–744; that stretch reads DPWHMFH. Residues 745–765 form a helical membrane-spanning segment; sequence SFPYYMLLMSTYINILMIYAF. At 766-843 the chain is on the cytoplasmic side; sequence NNWHDVSWGT…DLEDSYKSFR (78 aa). A helical transmembrane segment spans residues 844–864; sequence TMLVVSWLFSNCLLAVVITSD. The Extracellular segment spans residues 865–884; it reads NFNTFGIGQTASARTAWFFK. A helical membrane pass occupies residues 885 to 905; sequence FLLFATGALSVIRFIGFCWFL. Residues 906 to 917 lie on the Cytoplasmic side of the membrane; the sequence is GRTGIMCCFARR.

It belongs to the chitin synthase family. Class III subfamily.

It is found in the cell membrane. The enzyme catalyses [(1-&gt;4)-N-acetyl-beta-D-glucosaminyl](n) + UDP-N-acetyl-alpha-D-glucosamine = [(1-&gt;4)-N-acetyl-beta-D-glucosaminyl](n+1) + UDP + H(+). Functionally, polymerizes chitin, a structural polymer of the cell wall and septum, by transferring the sugar moiety of UDP-GlcNAc to the non-reducing end of the growing chitin polymer. The polypeptide is Chitin synthase 1 (chs-1) (Neurospora crassa (strain ATCC 24698 / 74-OR23-1A / CBS 708.71 / DSM 1257 / FGSC 987)).